Reading from the N-terminus, the 476-residue chain is DnaJ homolog subfamily C member 7 homolog (476 aa).

A disordered region spans residues 1–22 (MTEVETTHMNAGTESQQEPAEL). The segment covering 7–18 (THMNAGTESQQE) has biased composition (polar residues). TPR repeat units follow at residues 23-56 (AEKQ…GSDS), 59-92 (AIYY…KPDV), 143-176 (MSWM…NPKN), 177-210 (VEAL…DPDC), 223-256 (LENT…DPDN), 261-294 (AKLY…DSSY), and 295-328 (LKGL…DASD). Residues 349 to 414 (DHYKILGVSK…ESRRRFDSGV (66 aa)) form the J domain.

It localises to the cytoplasm. This is DnaJ homolog subfamily C member 7 homolog from Schizosaccharomyces pombe (strain 972 / ATCC 24843) (Fission yeast).